The primary structure comprises 98 residues: Major carboxysome shell protein CsoS1A (98 aa).

One can recognise a BMC domain in the interval 8-93 (ALGMIETRGL…VHSEVENILP (86 aa)).

Belongs to the bacterial microcompartments protein family. CsoS1 subfamily. As to quaternary structure, homohexamer with a small central pore; the concave side is mostly positive electrostatic potential, whereas the convex side is mostly negative electrostatic potential. Forms a CsoS2-CsoS1-RuBisCO complex. Interacts with the N-terminus (residues 1-136) of RuBisCO (CbbL).

It is found in the carboxysome. The major shell protein of the carboxysome, a polyhedral inclusion where RuBisCO (ribulose bisphosphate carboxylase, ccbL-ccbS) is sequestered. Assembles into hexamers which make sheets that form the facets of the polyhedral carboxysome. The shell probably limits the diffusion of CO(2) into and out of the carboxysome. Molecular modeling shows the central pore of this protein is selectively permeable to anions such as HCO(3) rather than CO(2) or O(2). There are estimated to be 2970 CsoS1A/CsoS1C proteins per carboxysome (the proteins differ by only 1 residue). In terms of biological role, unlike beta-carboxysomes, alpha-carboxysomes (Cb) can form without cargo protein. CsoS2 is essential for Cb formation and is also capable of targeting foreign proteins to the Cb. The Cb shell assembles with the aid of CsoS2; CsoS1A, CsoS1B and CsoS1C form the majority of the shell while CsoS4A and CsoS4B form vertices. CsoS1D forms pseudohexamers that probably control metabolite flux into and out of the shell. This Halothiobacillus neapolitanus (strain ATCC 23641 / c2) (Thiobacillus neapolitanus) protein is Major carboxysome shell protein CsoS1A.